Reading from the N-terminus, the 332-residue chain is Adenosine deaminase (332 aa).

2 residues coordinate Zn(2+): histidine 12 and histidine 14. Histidine 14, aspartate 16, and glycine 170 together coordinate substrate. Histidine 197 is a binding site for Zn(2+). The active-site Proton donor is glutamate 200. A Zn(2+)-binding site is contributed by aspartate 278. Aspartate 279 contributes to the substrate binding site.

Belongs to the metallo-dependent hydrolases superfamily. Adenosine and AMP deaminases family. Adenosine deaminase subfamily. Zn(2+) is required as a cofactor.

It carries out the reaction adenosine + H2O + H(+) = inosine + NH4(+). The enzyme catalyses 2'-deoxyadenosine + H2O + H(+) = 2'-deoxyinosine + NH4(+). In terms of biological role, catalyzes the hydrolytic deamination of adenosine and 2-deoxyadenosine. This Serratia proteamaculans (strain 568) protein is Adenosine deaminase.